A 712-amino-acid chain; its full sequence is Phosphatase and actin regulator 4 (712 aa).

2 disordered regions span residues 1-22 (MGQADISRPVNPDGVEEIGQPT) and 90-405 (RGLL…EVPK). An RPEL 1 repeat occupies 72–97 (EVLERKISMRKPREELVKRGLLLEDS). Over residues 114 to 124 (NGHTTLIGSTR) the composition is skewed to polar residues. Residues Ser-125, Ser-127, Ser-140, and Ser-156 each carry the phosphoserine modification. A compositionally biased stretch (basic and acidic residues) spans 136-152 (ERIASLRKPVPEEEPKK). A compositionally biased stretch (low complexity) spans 198-230 (ATSSGSLARPSSSASTTAITTAPAATMAATNPA). Residues 233–243 (VHSSGPPSQAP) are compositionally biased toward polar residues. The segment covering 245–267 (TLPAAPASTHTTATLSLTHTGPA) has biased composition (low complexity). Phosphoserine occurs at positions 282, 303, and 353. The span at 345–357 (SEPLLTPSSSPLP) shows a compositional bias: low complexity. Over residues 358 to 371 (AHIPPEPPQSPPFP) the composition is skewed to pro residues. Ser-436 bears the Phosphoserine mark. Thr-441 carries the phosphothreonine modification. A phosphoserine mark is found at Ser-452, Ser-462, Ser-473, Ser-524, Ser-526, Ser-567, and Ser-600. A disordered region spans residues 507–557 (VIPKLPQCLQEEEEGKESDSDSEGPIQYRDEEDEDESHHSALANKVKRKDT). The segment covering 516–528 (QEEEEGKESDSDS) has biased composition (acidic residues). 2 RPEL repeats span residues 593–618 (NTLIRRLSQRPTPEELEQRNILQPKN) and 631–656 (RRLTRKLSQRPTVAELLARKILRFNE). The tract at residues 602–626 (RPTPEELEQRNILQPKNEADRQAEK) is disordered. Ser-638 carries the post-translational modification Phosphoserine.

Belongs to the phosphatase and actin regulator family. As to quaternary structure, binds PPP1CA and actin.

It is found in the cytoplasm. The protein localises to the cell projection. It localises to the lamellipodium. Regulator of protein phosphatase 1 (PP1) required for neural tube and optic fissure closure, and enteric neural crest cell (ENCCs) migration during development. Acts as an activator of PP1 by interacting with PPP1CA and preventing phosphorylation of PPP1CA at 'Thr-320'. During neural tube closure, localizes to the ventral neural tube and activates PP1, leading to down-regulate cell proliferation within cranial neural tissue and the neural retina. Also acts as a regulator of migration of enteric neural crest cells (ENCCs) by activating PP1, leading to dephosphorylation and subsequent activation of cofilin (COF1 or COF2) and repression of the integrin signaling through the RHO/ROCK pathway. This chain is Phosphatase and actin regulator 4 (PHACTR4), found in Bos taurus (Bovine).